A 614-amino-acid chain; its full sequence is Sulfite reductase [NADPH] flavoprotein alpha-component (614 aa).

A Flavodoxin-like domain is found at 79–217 (LTIIFASQTG…AATEWRKQVL (139 aa)). Residues 85 to 90 (SQTGNA), 132 to 135 (STNG), and 168 to 177 (LGDSSYQFFC) contribute to the FMN site. Residues 249–463 (EQPYTASLST…VEHNNNFKLP (215 aa)) form the FAD-binding FR-type domain. Residues Thr337, Thr371, 401-404 (RLYS), 419-421 (TVG), Tyr425, and 434-437 (GGAS) each bind FAD. NADP(+)-binding positions include 534-535 (SR), 540-544 (KVYVQ), and Asp576. Residue Tyr614 participates in FAD binding.

It belongs to the NADPH-dependent sulphite reductase flavoprotein subunit CysJ family. This sequence in the N-terminal section; belongs to the flavodoxin family. The protein in the C-terminal section; belongs to the flavoprotein pyridine nucleotide cytochrome reductase family. Alpha(8)-beta(8). The alpha component is a flavoprotein, the beta component is a hemoprotein. FAD is required as a cofactor. FMN serves as cofactor.

It catalyses the reaction hydrogen sulfide + 3 NADP(+) + 3 H2O = sulfite + 3 NADPH + 4 H(+). The protein operates within sulfur metabolism; hydrogen sulfide biosynthesis; hydrogen sulfide from sulfite (NADPH route): step 1/1. Its function is as follows. Component of the sulfite reductase complex that catalyzes the 6-electron reduction of sulfite to sulfide. This is one of several activities required for the biosynthesis of L-cysteine from sulfate. The flavoprotein component catalyzes the electron flow from NADPH -&gt; FAD -&gt; FMN to the hemoprotein component. The protein is Sulfite reductase [NADPH] flavoprotein alpha-component of Vibrio cholerae serotype O1 (strain ATCC 39315 / El Tor Inaba N16961).